The sequence spans 239 residues: MKLSTIFTAFAATIATVAGYETTGSKQTVDILIDYIIKETPELSQNDVANWENGDTVTLQYVVNNNEESEITVVGVTGQFKNPINNEIVTNLTTGKVGPIAVPPGEAIKFDQKINVDLIPANYELIPHVFIAQDSLIKVIPCRGQLATIVDAAVSFFDPRLIFLELVLLITFAGLIYVGYEIWGKQYFKGVAPVKAKKVSAAKASSPVASGPSTTSATGYDTNWIPESHLKQKKTKKVN.

The signal sequence occupies residues 1–19 (MKLSTIFTAFAATIATVAG). Residues 20–161 (YETTGSKQTV…AAVSFFDPRL (142 aa)) lie on the Lumenal side of the membrane. Residues 162–182 (IFLELVLLITFAGLIYVGYEI) form a helical membrane-spanning segment. Topologically, residues 183 to 239 (WGKQYFKGVAPVKAKKVSAAKASSPVASGPSTTSATGYDTNWIPESHLKQKKTKKVN) are cytoplasmic. Low complexity predominate over residues 201–213 (AAKASSPVASGPS). The segment at 201 to 222 (AAKASSPVASGPSTTSATGYDT) is disordered.

Belongs to the IRC22 family.

Its subcellular location is the endoplasmic reticulum membrane. Is probably involved in a pathway contributing to genomic integrity. This Candida albicans (strain WO-1) (Yeast) protein is Increased recombination centers protein 22-2 (IRC22-2).